The chain runs to 365 residues: 3-dehydroquinate synthase (365 aa).

NAD(+) is bound by residues 106-110 (GVIGD), 130-131 (TT), lysine 142, lysine 151, and 169-172 (FFAT). Zn(2+)-binding residues include glutamate 184, histidine 247, and histidine 264.

Belongs to the sugar phosphate cyclases superfamily. Dehydroquinate synthase family. NAD(+) serves as cofactor. The cofactor is Co(2+). Requires Zn(2+) as cofactor.

Its subcellular location is the cytoplasm. It catalyses the reaction 7-phospho-2-dehydro-3-deoxy-D-arabino-heptonate = 3-dehydroquinate + phosphate. Its pathway is metabolic intermediate biosynthesis; chorismate biosynthesis; chorismate from D-erythrose 4-phosphate and phosphoenolpyruvate: step 2/7. Catalyzes the conversion of 3-deoxy-D-arabino-heptulosonate 7-phosphate (DAHP) to dehydroquinate (DHQ). In Listeria monocytogenes serovar 1/2a (strain ATCC BAA-679 / EGD-e), this protein is 3-dehydroquinate synthase.